The sequence spans 83 residues: Kunitz-type serine protease inhibitor PILP-2 (83 aa).

An N-terminal signal peptide occupies residues 1 to 24 (MSSGGLLLLLGLLTLWMELTPVSS). Positions 31 to 81 (CNLLPEPGRCNAIVRAFYYNSRPRKCLEFPYGGCGGNANNFKTIEECQRTC) constitute a BPTI/Kunitz inhibitor domain. Cystine bridges form between cysteine 31-cysteine 81, cysteine 40-cysteine 64, and cysteine 56-cysteine 77.

It belongs to the venom Kunitz-type family. As to expression, expressed by the venom gland.

The protein resides in the secreted. In terms of biological role, shows weak binding and inhibition of MMP-2 and shows an activity in inhibiting migration and invasion of neuroblastoma. This Bungarus multicinctus (Many-banded krait) protein is Kunitz-type serine protease inhibitor PILP-2.